Consider the following 1072-residue polypeptide: MLGDGKEGTSTIPGFNQIQFEGFYRFIDQGLIEELSKFPKIEDIDHEIEFQLFVETYQLVEPLIKERDAVYESLTYSSEIYVSAGLIWKTSRNMQEQRIFIGNIPLMNSLGISIVNGIYRIVINQILQSPGIYYQSELDHNGISVYTGTIISDWGGRLELEIDKKARIWARVSRKQKISILVLSSAMGSNLREILENVCYPEIFLSFLTDKEKKKIGSKENAILEFYQQFSCVGGDPIFSESLCKELQKKFFHQRCELGRIGRRNINSRLNLNIPQNNIFLLPRDILAAADHLIGMKFGMGTLDDMNHLKNKRIRSVADLLQDQLGLALARLENVVKGTIGGAIRHKLIPTPQNLVTSTPLTTTYESFFGLHPLSQVLDRTNPLTQIVHGRKLSYLGPGGLTGRTANFRIRDIHPSHYGRICPIDTSEGINVGLIGSLSIHARIGDWGSLESPFYELFCKSKKARIRMLFLSPSQDEYYMIAAGNSLALNRDIQEEQAVPARYRQEFLTIAWEEVHLRSIFPFQYFSIGASLIPFIEHNDANRALMSSNMQRQAVPLSRSEKCIVGTGLERQVALDSGVPAIAEHEGKILSTDTEKIILSGNGNTLSIPLIMYQRSNKNTCMHQKPQVRRGQCIKKGQILADGAATVGGELALGKNILVAYMPWEGYNFEDAVLISECLVYGDIYTSFHIRKYEIQTHVTTQGPERITKEIPHLEGRLLRNLDKNGIVMLGSWVETGDILVGKLTPQMAKESSYAPEDRLLRAILGIQVSTSKETCLKLPIGGRGRVIDVRWVQKKGGSSYNPEIIRVYISQKREIKVGDKVAGRHGNKGIISKILPRQDMPYLQDGRPVDMVFNPLGVPSRMNVGQIFECSLGLAGSLLDRHYRIAPFDERYEQEASRKLVFSELYEASKQTANPWVFEPEYPGKSRIFDGRTGDPFEQPVIIGKPYILKLIHQVDDKIHGRSSGHYALVTQQPLRGRSKQGGQRVGEMEVWALEGFGVAHILQEMLTYKSDHIRARQEVLGTTIIGGTIPKPEDAPESFRLLVRELRSLALELNHFLVSEKNFQINRQEV.

It belongs to the RNA polymerase beta chain family. In plastids the minimal PEP RNA polymerase catalytic core is composed of four subunits: alpha, beta, beta', and beta''. When a (nuclear-encoded) sigma factor is associated with the core the holoenzyme is formed, which can initiate transcription.

The protein resides in the plastid. Its subcellular location is the chloroplast. The catalysed reaction is RNA(n) + a ribonucleoside 5'-triphosphate = RNA(n+1) + diphosphate. Its function is as follows. DNA-dependent RNA polymerase catalyzes the transcription of DNA into RNA using the four ribonucleoside triphosphates as substrates. The sequence is that of DNA-directed RNA polymerase subunit beta from Draba nemorosa (Woodland whitlowgrass).